We begin with the raw amino-acid sequence, 589 residues long: Putative phospholipase B-like 2 (589 aa).

The N-terminal stretch at 1–41 (MVGQMYCYPGSHLARALTRALALALVLALLVGPFLSGLAGA) is a signal peptide. N88 and N110 each carry an N-linked (GlcNAc...) asparagine glycan. C142 and C152 are oxidised to a cystine. Residues N231, N436, and N465 are each glycosylated (N-linked (GlcNAc...) asparagine). C492 and C495 form a disulfide bridge. An N-linked (GlcNAc...) asparagine glycan is attached at N515.

This sequence belongs to the phospholipase B-like family. In terms of assembly, interacts with IGF2R. In terms of processing, the p76 protein is synthesized as a 80 kDa precursor which is then processed into a N-terminal 32 kDa form and a C-terminal 45 kDa form. Post-translationally, glycosylated; contains mannose 6-phosphate sugars. As to expression, ubiquitously expressed, with highest levels in heart, brain and liver.

It localises to the lysosome lumen. Its function is as follows. Putative phospholipase. In Homo sapiens (Human), this protein is Putative phospholipase B-like 2 (PLBD2).